The primary structure comprises 435 residues: Adenylosuccinate synthetase (435 aa).

Residues G12–K18 and G40–T42 each bind GTP. Residue D13 is the Proton acceptor of the active site. D13 and G40 together coordinate Mg(2+). IMP is bound by residues D13–K16, N38–H41, T130, R144, Q224, T239, and R301. H41 serves as the catalytic Proton donor. T297–R303 is a substrate binding site. Residues R303, K329–D331, and S411–G413 contribute to the GTP site.

It belongs to the adenylosuccinate synthetase family. Homodimer. It depends on Mg(2+) as a cofactor.

It localises to the cytoplasm. It catalyses the reaction IMP + L-aspartate + GTP = N(6)-(1,2-dicarboxyethyl)-AMP + GDP + phosphate + 2 H(+). It participates in purine metabolism; AMP biosynthesis via de novo pathway; AMP from IMP: step 1/2. Functionally, plays an important role in the de novo pathway of purine nucleotide biosynthesis. Catalyzes the first committed step in the biosynthesis of AMP from IMP. In Wolbachia sp. subsp. Brugia malayi (strain TRS), this protein is Adenylosuccinate synthetase.